Reading from the N-terminus, the 165-residue chain is UPF0254 protein MmarC5_0742 (165 aa).

It belongs to the UPF0254 family.

This is UPF0254 protein MmarC5_0742 from Methanococcus maripaludis (strain C5 / ATCC BAA-1333).